Here is a 384-residue protein sequence, read N- to C-terminus: Putative glutamate--cysteine ligase 2 (384 aa).

Belongs to the glutamate--cysteine ligase type 2 family. YbdK subfamily.

It carries out the reaction L-cysteine + L-glutamate + ATP = gamma-L-glutamyl-L-cysteine + ADP + phosphate + H(+). Its function is as follows. ATP-dependent carboxylate-amine ligase which exhibits weak glutamate--cysteine ligase activity. This chain is Putative glutamate--cysteine ligase 2, found in Ruegeria pomeroyi (strain ATCC 700808 / DSM 15171 / DSS-3) (Silicibacter pomeroyi).